The sequence spans 3019 residues: Genome polyprotein (3019 aa).

Ser-2 carries the N-acetylserine; by host modification. The tract at residues 2–23 (STLPKPQRKTKRNTNRRPMDVK) is interaction with STAT1. The interval 2–58 (STLPKPQRKTKRNTNRRPMDVKFPGGGQIVGGVYLLPRRGPRLGVRATRKTSERSQP) is interaction with EIF2AK2/PKR. The interval 2–59 (STLPKPQRKTKRNTNRRPMDVKFPGGGQIVGGVYLLPRRGPRLGVRATRKTSERSQPR) is interaction with DDX3X. The tract at residues 2 to 75 (STLPKPQRKT…PKARQPQGRH (74 aa)) is disordered. Over 2–168 (STLPKPQRKT…EDGINYATGN (167 aa)) the chain is Cytoplasmic. 2 consecutive short sequence motifs (nuclear localization signal) follow at residues 5–13 (PKPQRKTKR) and 38–43 (PRRGPR). Residues 7–16 (PQRKTKRNTN) show a composition bias toward basic residues. Residues 32-47 (GGVYLLPRRGPRLGVR) are compositionally biased toward low complexity. Residue Ser-53 is modified to Phosphoserine; by host. 2 consecutive short sequence motifs (nuclear localization signal) follow at residues 58-64 (PRGRRQP) and 66-71 (PKARQP). Ser-99 is subject to Phosphoserine; by host. The tract at residues 112 to 152 (PRRRSRNLGKVIDTLTCGFADLMGYIPVVGAPLGGVAAALA) is important for endoplasmic reticulum and mitochondrial localization. Ser-116 carries the phosphoserine; by host PKA modification. The segment at 122–173 (VIDTLTCGFADLMGYIPVVGAPLGGVAAALAHGVRAIEDGINYATGNLPGCS) is interaction with APOA2. The interval 164–167 (YATG) is important for lipid droplets localization. The helical transmembrane segment at 169 to 189 (LPGCSFSIFLLALLSCLTTPA) threads the bilayer. Residues 178–191 (LLALLSCLTTPASA) constitute a propeptide, ER anchor for the core protein, removed in mature form by host signal peptidase. Topologically, residues 190–358 (SALTYGNSSG…FGGHWGILLA (169 aa)) are lumenal. N-linked (GlcNAc...) asparagine; by host glycosylation is found at Asn-196, Asn-209, Asn-234, and Asn-250. Residues 265–296 (LAGAAVVCSSLYIGDLCGSLFLAGQLFTFQPR) are important for fusion. Asn-305 carries an N-linked (GlcNAc...) asparagine; by host glycan. Residues 359-379 (VAYFGMAGNWLKVLAVLFLFA) form a helical membrane-spanning segment. The Lumenal segment spans residues 380–730 (GVEATTTVGH…WEYIVLMFLV (351 aa)). The segment at 385–411 (TTVGHGVARTTAGITGLFSPGASQNLQ) is HVR1. A glycan (N-linked (GlcNAc...) asparagine; by host) is linked at Asn-415. N-linked (GlcNAc...) (high mannose) asparagine; by host glycosylation is found at Asn-422 and Asn-429. Cystine bridges form between Cys-428–Cys-553, Cys-451–Cys-458, Cys-487–Cys-495, and Cys-504–Cys-509. Asn-447 carries N-linked (GlcNAc...) asparagine; by host glycosylation. Residues 474–479 (KVNISG) form an HVR2 region. N-linked (GlcNAc...) asparagine; by host glycosylation is present at Asn-476. The CD81-binding 1 stretch occupies residues 481 to 494 (SDDRPYCWHYAPRP). N-linked (GlcNAc...) asparagine; by host glycosylation occurs at Asn-533. Positions 545-552 (PPTGGWFG) are CD81-binding 2. N-linked (GlcNAc...) asparagine; by host glycosylation occurs at Asn-557. Cysteines 565 and 570 form a disulfide. A glycan (N-linked (GlcNAc...) asparagine; by host) is linked at Asn-578. 3 disulfides stabilise this stretch: Cys-586–Cys-590, Cys-602–Cys-625, and Cys-612–Cys-649. Residues Asn-628 and Asn-650 are each glycosylated (N-linked (GlcNAc...) (high mannose) asparagine; by host). A disulfide bridge connects residues Cys-657 and Cys-682. Residues 665 to 676 (IEMSPLLFSTTQ) are PKR/eIF2-alpha phosphorylation homology domain (PePHD). A helical transmembrane segment spans residues 731-751 (LADARICTCLWLMLLISNVEA). Topologically, residues 752 to 762 (AVERLVVLNAA) are lumenal. The helical transmembrane segment at 763 to 783 (SAAGTAGWWWAVLFLCCVWYV) threads the bilayer. Over 784–786 (KGR) the chain is Cytoplasmic. Residues 787–808 (LVPACTYMALGMWPLLLTILAL) traverse the membrane as a helical segment. Over 809-818 (PHRAYAMDNE) the chain is Lumenal. The chain crosses the membrane as a helical span at residues 819–839 (QAASLGAVGLLAITIFTITPT). At 840–843 (YKKL) the chain is on the cytoplasmic side. The helical transmembrane segment at 844-863 (LTCFIWWNQYFLARAEAMVH) threads the bilayer. Topologically, residues 864 to 886 (EWVPDLRVRGGRDSIILLTCLLH) are lumenal. A helical transmembrane segment spans residues 887-907 (PQLGFEVTKILLAILAPLYIL). Residues 908 to 1031 (QYSLLKVPYF…DMQRGGWKLL (124 aa)) enclose the Peptidase C18 domain. The Cytoplasmic portion of the chain corresponds to 908 to 1662 (QYSLLKVPYF…CMSADLEVIT (755 aa)). A protease NS2-3 region spans residues 909–1211 (YSLLKVPYFV…PVENMETTMR (303 aa)). A lipid anchor (S-palmitoyl cysteine; by host) is attached at Cys-927. The segment at 934 to 954 (AGGRYVQACLLRLGAWTGTFI) is interaction with host SCPS1. Catalysis depends on for protease NS2 activity; shared with dimeric partner residues His-957, Glu-977, and Cys-998. The 182-residue stretch at 1032 to 1213 (APITAYAQQT…ENMETTMRSP (182 aa)) folds into the Peptidase S29 domain. Residues His-1088 and Asp-1112 each act as charge relay system; for serine protease NS3 activity in the active site. Residues Cys-1128 and Cys-1130 each contribute to the Zn(2+) site. Ser-1170 (charge relay system; for serine protease NS3 activity) is an active-site residue. Zn(2+) is bound by residues Cys-1176 and His-1180. Positions 1222 to 1374 (PAVPQTYQVG…PNITETALPT (153 aa)) constitute a Helicase ATP-binding domain. Position 1235–1242 (1235–1242 (APTGSGKS)) interacts with ATP. The Mg(2+) site is built by Ser-1242 and Glu-1322. The short motif at 1321–1324 (DECH) is the DECH box element. The RNA-binding stretch occupies residues 1491–1503 (QRRGRTGRGKPGV). The helical transmembrane segment at 1663–1683 (STWVLVGGVLAALAAYCLSVG) threads the bilayer. Positions 1684 to 1695 (CVVICGRITLTG) are NS3-binding. The Cytoplasmic portion of the chain corresponds to 1684 to 1810 (CVVICGRITL…SLTSPLRTSQ (127 aa)). A helical transmembrane segment spans residues 1811-1829 (TLLLNILGGWIAAQVAPPP). Residues 1830–1833 (ASTA) lie on the Lumenal side of the membrane. A helical transmembrane segment spans residues 1834 to 1854 (FVVSGLAGAAVGSIRLGRVLV). Asp-1855 is a topological domain (cytoplasmic). The helical transmembrane segment at 1856 to 1876 (VLAGYGAGVSGALVAFKIMSG) threads the bilayer. Over 1877–1886 (DCPTTEDMVN) the chain is Lumenal. Residues 1887–1907 (LLPALLSPGALVVGVVCAAIL) traverse the membrane as a helical segment. Residues 1908–1977 (RRHVGPAEGA…WVNEDTATPC (70 aa)) are Cytoplasmic-facing. Cys-1977 is lipidated: S-palmitoyl cysteine; by host. The stretch at 1978–2007 (ATSWLRDVWDWVCTVLSDFKVWLQAKLFPR) is an intramembrane region. Residues 2008-2998 (LPGIPFLSCQ…YHSVSQARPR (991 aa)) lie on the Cytoplasmic side of the membrane. 4 residues coordinate Zn(2+): Cys-2016, Cys-2034, Cys-2036, and Cys-2057. An FKBP8-binding region spans residues 2125–2213 (EFFTEVDGVR…ASSSASQLSA (89 aa)). Residues 2125-2338 (EFFTEVDGVR…PIPPPRRKRL (214 aa)) form a transcriptional activation region. The segment at 2140-2144 (PPCKP) is interaction with non-structural protein 4A. The disordered stretch occupies residues 2189-2223 (ETASRRLKRGSPPSLASSSASQLSAPSLKATCTTS). The segment at 2194 to 2446 (RLKRGSPPSL…ALITPCAAEE (253 aa)) is interaction with host SKP2. Ser-2199 carries the post-translational modification Phosphoserine; by host; in p56. Residues 2199–2216 (SPPSLASSSASQLSAPSL) show a composition bias toward low complexity. Phosphoserine; by host; in p58 is present on residues Ser-2202, Ser-2206, Ser-2209, Ser-2212, and Ser-2215. Positions 2215 to 2254 (SLKATCTTSKDHPDMELIEANLLWRQEMGGNITRVESENK) are ISDR. The interval 2215-2280 (SLKATCTTSK…REISVSAECH (66 aa)) is interaction with EIF2AK2/PKR. An NS4B-binding region spans residues 2254–2312 (KVVVLDSFEPLTAEYDEREISVSAECHRPPRHKFPPALPIWARPDYNPPLLQAWQMPGY). Residues 2305 to 2383 (QAWQMPGYEP…SITSPDPPAP (79 aa)) form a V3 region. The SH3-binding motif lies at 2328–2331 (APIP). The short motif at 2333–2341 (PRRKRLVHL) is the Nuclear localization signal element. A Glycyl lysine isopeptide (Lys-Gly) (interchain with G-Cter in ubiquitin) cross-link involves residue Lys-2356. The tract at residues 2359-2418 (VEGSSDPGPSSDSGLSITSPDPPAPTTPDDACSEAESYSSMPPLEGEPGDPDLSSGSWST) is disordered. Residues 2361-2372 (GSSDPGPSSDSG) show a composition bias toward low complexity. Phosphoserine; by host occurs at positions 2457 and 2470. In terms of domain architecture, RdRp catalytic spans 2642–2760 (PMGFSYDTRC…ICESAGVQED (119 aa)). Mg(2+) contacts are provided by Asp-2648, Asp-2746, and Asp-2747. Residues 2999–3019 (LLLLGLLLLTVGVGIFLVPAR) traverse the membrane as a helical segment.

This sequence belongs to the hepacivirus polyprotein family. Homooligomer. Interacts with E1 (via C-terminus). Interacts with the non-structural protein 5A. Interacts (via N-terminus) with host STAT1 (via SH2 domain); this interaction results in decreased STAT1 phosphorylation and ubiquitin-mediated proteasome-dependent STAT1 degradation, leading to decreased IFN-stimulated gene transcription. Interacts with host STAT3; this interaction constitutively activates STAT3. Interacts with host LTBR receptor. Interacts with host TNFRSF1A receptor and possibly induces apoptosis. Interacts with host HNRPK. Interacts with host YWHAE. Interacts with host UBE3A/E6AP. Interacts with host DDX3X. Interacts with host APOA2. Interacts with host RXRA protein. Interacts with host SP110 isoform 3/Sp110b; this interaction sequesters the transcriptional corepressor SP110 away from the nucleus. Interacts with host CREB3 nuclear transcription protein; this interaction triggers cell transformation. Interacts with host ACY3. Interacts with host C1QR1. Interacts with host RBM24; this interaction, which enhances the interaction of the mature core protein with 5'-UTR, may inhibit viral translation and favor replication. Interacts with host EIF2AK2/PKR; this interaction induces the autophosphorylation of EIF2AK2. Part of the viral assembly initiation complex composed of NS2, E1, E2, NS3, NS4A, NS5A and the mature core protein. As to quaternary structure, forms a heterodimer with envelope glycoprotein E2. Interacts with mature core protein. Interacts with protease NS2. The heterodimer E1/E2 interacts with host CLDN1; this interaction plays a role in viral entry into host cell. Interacts with host SPSB2 (via C-terminus). Part of the viral assembly initiation complex composed of NS2, E1, E2, NS3, NS4A, NS5A and the mature core protein. Interacts with host NEURL3; this interaction prevents E1 binding to glycoprotein E2. In terms of assembly, forms a heterodimer with envelope glycoprotein E1. Interacts with host CD81 and SCARB1 receptors; these interactions play a role in viral entry into host cell. Interacts with host EIF2AK2/PKR; this interaction inhibits EIF2AK2 and probably allows the virus to evade the innate immune response. Interacts with host CD209/DC-SIGN and CLEC4M/DC-SIGNR. Interact with host SPCS1; this interaction is essential for viral particle assembly. Interacts with protease NS2. The heterodimer E1/E2 interacts with host CLDN1; this interaction plays a role in viral entry into host cell. Part of the viral assembly initiation complex composed of NS2, E1, E2, NS3, NS4A, NS5A and the mature core protein. Interacts with host SLC3A2/4F2hc; the interaction may facilitate viral entry into host cell. Interacts with human PLSCR1. Homohexamer. Homoheptamer. Interacts with protease NS2. As to quaternary structure, homodimer. Interacts with host SPCS1; this interaction is essential for viral particle assembly. Interacts with envelope glycoprotein E1. Interacts with envelope glycoprotein E2. Interacts with viroporin p7. Interacts with serine protease/helicase NS3. Part of the replication complex composed of NS2, NS3, NS4A, NS4B, NS5A and the RNA-directed RNA polymerase embedded in an ER-derived membranous web. Part of the viral assembly initiation complex composed of NS2, E1, E2, NS3, NS4A, NS5A and the mature core protein. In terms of assembly, interacts with protease NS2. Interacts with non-structural protein 4A; this interaction stabilizes the folding of NS3 serine protease. NS3-NS4A interaction is essential for NS3 activation and allows membrane anchorage of the latter. NS3/NS4A complex also prevents phosphorylation of host IRF3, thus preventing the establishment of dsRNA induced antiviral state. Interacts with host MAVS; this interaction leads to the cleavage and inhibition of host MAVS. Interacts with host TICAM1; this interaction leads to the cleavage and inhibition of host TICAM1. Interacts with host TANK-binding kinase/TBK1; this interaction results in the inhibition of the association between TBK1 and IRF3, which leads to the inhibition of IRF3 activation. Interacts with host RBM24. Part of the replication complex composed of NS2, NS3, NS4A, NS4B, NS5A and the RNA-directed RNA polymerase embedded in an ER-derived membranous web. Part of the viral assembly initiation complex composed of NS2, E1, E2, NS3, NS4A, NS5A and the mature core protein. Interacts with NS3 serine protease; this interaction stabilizes the folding of NS3 serine protease. NS3-NS4A interaction is essential for NS3 activation and allows membrane anchorage of the latter. Interacts with non-structural protein 5A (via N-terminus). Part of the replication complex composed of NS2, NS3, NS4A, NS4B, NS5A and the RNA-directed RNA polymerase embedded in an ER-derived membranous web. Part of the viral assembly initiation complex composed of NS2, E1, E2, NS3, NS4A, NS5A and the mature core protein. As to quaternary structure, homomultimer. Interacts with non-structural protein NS5A. Interacts with host PLA2G4C; this interaction likely initiates the recruitment of replication complexes to lipid droplets. Interacts with host STING; this interaction disrupts the interaction between STING and TBK1 thereby suppressing the interferon signaling. Part of the replication complex composed of NS2, NS3, NS4A, NS4B, NS5A and the RNA-directed RNA polymerase embedded in an ER-derived membranous web. In terms of assembly, monomer. Homodimer; dimerization is required for RNA-binding. Interacts with the mature core protein. Interacts (via N-terminus) with non-structural protein 4A. Interacts with non-structural protein 4B. Interacts (via region D2) with RNA-directed RNA polymerase. Part of the viral assembly initiation complex composed of NS2, E1, E2, NS3, NS4A, NS5A and the mature core protein. Part of the replication complex composed of NS2, NS3, NS4A, NS4B, NS5A and the RNA-directed RNA polymerase embedded in an ER-derived membranous web. Interacts with host GRB2. Interacts with host BIN1. Interacts with host PIK3R1. Interacts with host SRCAP. Interacts with host FKBP8. Interacts (via C-terminus) with host VAPB (via MSP domain). Interacts with host EIF2AK2/PKR; this interaction leads to disruption of EIF2AK2 dimerization by NS5A and probably allows the virus to evade the innate immune response. Interacts (via N-terminus) with host PACSIN2 (via N-terminus); this interaction attenuates protein kinase C alpha-mediated phosphorylation of PACSIN2 by disrupting the interaction between PACSIN2 and PRKCA. Interacts (via N-terminus) with host SRC kinase (via SH2 domain). Interacts with most Src-family kinases. Interacts with host IFI27 and SKP2; promotes the ubiquitin-mediated proteasomal degradation of NS5A. Interacts with host GPS2. Interacts with host TNFRSF21; this interaction allows the modulation by the virus of JNK, p38 MAPK, STAT3, and Akt signaling pathways in a DR6-dependent manner. Interacts (via N-terminus) with host CIDEB (via N-terminus); this interaction seems to regulate the association of HCV particles with APOE. Interacts with host CHKA/Choline Kinase-alpha; CHKA bridges host PI4KA and NS5A and potentiates NS5A-stimulated PI4KA activity, which then facilitates the targeting of the ternary complex to the ER for viral replication. Interacts with host SPSB2 (via C-terminus); this interaction targets NS5A for ubiquitination and degradation. Interacts with host RAB18; this interaction may promote the association of NS5A and other replicase components with lipid droplets. Interacts (via region D2) with host PPIA/CYPA; the interaction stimulates RNA-binding ability of NS5A and is dependent on the peptidyl-prolyl cis-trans isomerase activity of PPIA/CYPA. Interacts with host TRIM14; this interaction induces the degradation of NS5A. Homooligomer. Interacts with non-structural protein 5A. Interacts with host VAPB. Interacts with host PRK2/PKN2. Interacts with host HNRNPA1 and SEPT6; these interactions facilitate viral replication. Part of the replication complex composed of NS2, NS3, NS4A, NS4B, NS5A and the RNA-directed RNA polymerase. Zn(2+) is required as a cofactor. It depends on Mg(2+) as a cofactor. Post-translationally, specific enzymatic cleavages in vivo yield mature proteins. The structural proteins, core, E1, E2 and p7 are produced by proteolytic processing by host signal peptidases. The core protein precursor is synthesized as a 23 kDa, which is retained in the ER membrane through the hydrophobic signal peptide. Cleavage by the signal peptidase releases the 21 kDa mature core protein. The cleavage of the core protein precursor occurs between aminoacids 176 and 188 but the exact cleavage site is not known. Some degraded forms of the core protein appear as well during the course of infection. The other proteins (p7, NS2, NS3, NS4A, NS4B, NS5A and NS5B) are cleaved by the viral proteases. Autoprocessing between NS2 and NS3 is mediated by the NS2 cysteine protease catalytic domain and regulated by the NS3 N-terminal domain. In terms of processing, phosphorylated by host PKC and PKA. Ubiquitinated; mediated by UBE3A and leading to core protein subsequent proteasomal degradation. Post-translationally, highly N-glycosylated. In terms of processing, palmitoylation is required for NS2/3 autoprocessing and E2 recruitment to membranes. Palmitoylated. This modification may play a role in its polymerization or in protein-protein interactions. Post-translationally, phosphorylated on serines in a basal form termed p56. p58 is a hyperphosphorylated form of p56. p56 and p58 coexist in the cell in roughly equivalent amounts. Hyperphosphorylation is dependent on the presence of NS4A. Host CSNK1A1/CKI-alpha or RPS6KB1 kinases may be responsible for NS5A phosphorylation. In terms of processing, tyrosine phosphorylation is essential for the interaction with host SRC. The N-terminus is phosphorylated by host PRK2/PKN2.

The protein resides in the host endoplasmic reticulum membrane. Its subcellular location is the host mitochondrion membrane. The protein localises to the virion. It is found in the host cytoplasm. It localises to the host nucleus. The protein resides in the host lipid droplet. Its subcellular location is the virion membrane. The protein localises to the host mitochondrion. It is found in the host cell membrane. It localises to the host perinuclear region. It carries out the reaction Hydrolysis of four peptide bonds in the viral precursor polyprotein, commonly with Asp or Glu in the P6 position, Cys or Thr in P1 and Ser or Ala in P1'.. The catalysed reaction is a ribonucleoside 5'-triphosphate + H2O = a ribonucleoside 5'-diphosphate + phosphate + H(+). The enzyme catalyses ATP + H2O = ADP + phosphate + H(+). It catalyses the reaction RNA(n) + a ribonucleoside 5'-triphosphate = RNA(n+1) + diphosphate. With respect to regulation, inhibited by the antiviral drug hexamethylene amiloride. Inhibition by amantadine appears to be genotype-dependent. Also inhibited by long-alkyl-chain iminosugar derivatives. Its activity is regulated as follows. Activity is up-regulated by PRK2/PKN2-mediated phosphorylation. In terms of biological role, packages viral RNA to form a viral nucleocapsid, and promotes virion budding. Participates in the viral particle production as a result of its interaction with the non-structural protein 5A. Binds RNA and may function as a RNA chaperone to induce the RNA structural rearrangements taking place during virus replication. Modulates viral translation initiation by interacting with viral IRES and 40S ribosomal subunit. Affects various cell signaling pathways, host immunity and lipid metabolism. Prevents the establishment of cellular antiviral state by blocking the interferon-alpha/beta (IFN-alpha/beta) and IFN-gamma signaling pathways and by blocking the formation of phosphorylated STAT1 and promoting ubiquitin-mediated proteasome-dependent degradation of STAT1. Activates STAT3 leading to cellular transformation. Regulates the activity of cellular genes, including c-myc and c-fos. May repress the promoter of p53, and sequester CREB3 and SP110 isoform 3/Sp110b in the cytoplasm. Represses cell cycle negative regulating factor CDKN1A, thereby interrupting an important check point of normal cell cycle regulation. Targets transcription factors involved in the regulation of inflammatory responses and in the immune response: suppresses TNF-induced NF-kappa-B activation, and activates AP-1. Binds to dendritic cells (DCs) via C1QR1, resulting in down-regulation of T-lymphocytes proliferation. Alters lipid metabolism by interacting with hepatocellular proteins involved in lipid accumulation and storage. Induces up-regulation of FAS promoter activity, and thereby contributes to the increased triglyceride accumulation in hepatocytes (steatosis). Functionally, forms a heterodimer with envelope glycoprotein E2, which mediates virus attachment to the host cell, virion internalization through clathrin-dependent endocytosis and fusion with host membrane. Fusion with the host cell is most likely mediated by both E1 and E2, through conformational rearrangements of the heterodimer required for fusion rather than a classical class II fusion mechanism. E1/E2 heterodimer binds host apolipoproteins such as APOB and ApoE thereby forming a lipo-viro-particle (LVP). APOE associated to the LVP allows the initial virus attachment to cell surface receptors such as the heparan sulfate proteoglycans (HSPGs), syndecan-1 (SDC1), syndecan-1 (SDC2), the low-density lipoprotein receptor (LDLR) and scavenger receptor class B type I (SCARB1). The cholesterol transfer activity of SCARB1 allows E2 exposure and binding of E2 to SCARB1 and the tetraspanin CD81. E1/E2 heterodimer binding on CD81 activates the epithelial growth factor receptor (EGFR) signaling pathway. Diffusion of the complex E1-E2-EGFR-SCARB1-CD81 to the cell lateral membrane allows further interaction with Claudin 1 (CLDN1) and occludin (OCLN) to finally trigger HCV entry. Its function is as follows. Forms a heterodimer with envelope glycoprotein E1, which mediates virus attachment to the host cell, virion internalization through clathrin-dependent endocytosis and fusion with host membrane. Fusion with the host cell is most likely mediated by both E1 and E2, through conformational rearrangements of the heterodimer required for fusion rather than a classical class II fusion mechanism. The interaction between envelope glycoprotein E2 and host apolipoprotein E/APOE allows the proper assembly, maturation and infectivity of the viral particles. This interaction is probably promoted via the up-regulation of cellular autophagy by the virus. E1/E2 heterodimer binds host apolipoproteins such as APOB and APOE thereby forming a lipo-viro-particle (LVP). APOE associated to the LVP allows the initial virus attachment to cell surface receptors such as the heparan sulfate proteoglycans (HSPGs), syndecan-1 (SDC1), syndecan-1 (SDC2), the low-density lipoprotein receptor (LDLR) and scavenger receptor class B type I (SCARB1). The cholesterol transfer activity of SCARB1 allows E2 exposure and binding of E2 to SCARB1 and the tetraspanin CD81. E1/E2 heterodimer binding on CD81 activates the epithelial growth factor receptor (EGFR) signaling pathway. Diffusion of the complex E1-E2-EGFR-SCARB1-CD81 to the cell lateral membrane allows further interaction with Claudin 1 (CLDN1) and occludin (OCLN) to finally trigger HCV entry. Inhibits host EIF2AK2/PKR activation, preventing the establishment of an antiviral state. Viral ligand for CD209/DC-SIGN and CLEC4M/DC-SIGNR, which are respectively found on dendritic cells (DCs), and on liver sinusoidal endothelial cells and macrophage-like cells of lymph node sinuses. These interactions allow the capture of circulating HCV particles by these cells and subsequent facilitated transmission to permissive cells such as hepatocytes and lymphocyte subpopulations. The interaction between E2 and host amino acid transporter complex formed by SLC3A2 and SLC7A5/LAT1 may facilitate viral entry into host cell. Ion channel protein that acts as a viroporin and plays an essential role in the assembly, envelopment and secretion of viral particles. Regulates the host cell secretory pathway, which induces the intracellular retention of viral glycoproteins and favors assembly of viral particles. Creates a pore in acidic organelles and releases Ca(2+) and H(+) in the cytoplasm of infected cells, leading to a productive viral infection. High levels of cytoplasmic Ca(2+) may trigger membrane trafficking and transport of viral ER-associated proteins to viroplasms, sites of viral genome replication. This ionic imbalance induces the assembly of the inflammasome complex, which triggers the maturation of pro-IL-1beta into IL-1beta through the action of caspase-1. Targets also host mitochondria and induces mitochondrial depolarization. In addition of its role as a viroporin, acts as a lipid raft adhesion factor. In terms of biological role, cysteine protease required for the proteolytic auto-cleavage between the non-structural proteins NS2 and NS3. The N-terminus of NS3 is required for the function of NS2 protease (active region NS2-3). Promotes the initiation of viral particle assembly by mediating the interaction between structural and non-structural proteins. Functionally, displays three enzymatic activities: serine protease with a chymotrypsin-like fold, NTPase and RNA helicase. NS3 serine protease, in association with NS4A, is responsible for the cleavages of NS3-NS4A, NS4A-NS4B, NS4B-NS5A and NS5A-NS5B. The NS3/NS4A complex prevents phosphorylation of host IRF3, thus preventing the establishment of dsRNA induced antiviral state. The NS3/NS4A complex induces host amino acid transporter component SLC3A2, thus contributing to HCV propagation. NS3 RNA helicase binds to RNA and unwinds both dsDNA and dsRNA in the 3' to 5' direction, and likely resolves RNA complicated stable secondary structures in the template strand. Binds a single ATP and catalyzes the unzipping of a single base pair of dsRNA. Inhibits host antiviral proteins TBK1 and IRF3 thereby preventing the establishment of an antiviral state. Cleaves host MAVS/CARDIF thereby preventing the establishment of an antiviral state. Cleaves host TICAM1/TRIF, thereby disrupting TLR3 signaling and preventing the establishment of an antiviral state. Its function is as follows. Induces a specific membrane alteration that serves as a scaffold for the virus replication complex. This membrane alteration gives rise to the so-called ER-derived membranous web that contains the replication complex. NS4B self-interaction contributes to its function in membranous web formation. Promotes host TRIF protein degradation in a CASP8-dependent manner thereby inhibiting host TLR3-mediated interferon signaling. Disrupts the interaction between STING and TBK1 contributing to the inhibition of interferon signaling. Phosphorylated protein that is indispensable for viral replication and assembly. Both hypo- and hyperphosphorylated states are required for the viral life cycle. The hyperphosphorylated form of NS5A is an inhibitor of viral replication. Involved in RNA-binding and especially in binding to the viral genome. Zinc is essential for RNA-binding. Participates in the viral particle production as a result of its interaction with the mature viral core protein. Its interaction with host VAPB may target the viral replication complex to vesicles. Down-regulates viral IRES translation initiation. Mediates interferon resistance, presumably by interacting with and inhibiting host EIF2AK2/PKR. Prevents BIN1-induced apoptosis. Acts as a transcriptional activator of some host genes important for viral replication when localized in the nucleus. Via the interaction with host PACSIN2, modulates lipid droplet formation in order to promote virion assembly. Modulates TNFRSF21/DR6 signaling pathway for viral propagation. In terms of biological role, RNA-dependent RNA polymerase that performs primer-template recognition and RNA synthesis during viral replication. Initiates RNA transcription/replication at a flavin adenine dinucleotide (FAD), resulting in a 5'- FAD cap on viral RNAs. In this way, recognition of viral 5' RNA by host pattern recognition receptors can be bypassed, thereby evading activation of antiviral pathways. The protein is Genome polyprotein of Hepatitis C virus genotype 6a (isolate 6a33) (HCV).